The primary structure comprises 230 residues: Small ribosomal subunit protein uS3 (230 aa).

Positions 43–95 constitute a KH type-2 domain; it reads VNRVIIYSARPKMISEERKAHLAKLLELKFGLEKPVIEVLPIENPNLDAHVIA.

This sequence belongs to the universal ribosomal protein uS3 family. In terms of assembly, part of the 30S ribosomal subunit.

Binds the lower part of the 30S subunit head. This is Small ribosomal subunit protein uS3 from Nanoarchaeum equitans (strain Kin4-M).